A 219-amino-acid chain; its full sequence is MDAVLKSLSVRLPDAADKRSDTGRPERVTERPTRQEAEAAVRTLIRWAGDDPEREGLRETPQRVARAYEQIFGGYRQEPTHILDRVFEEVEGYGDIVLVRDIPFHSHCEHHMVPFIGRAHIAYYPRRGVVGLSKLARVVDAFARRLQTQETMTAQIADTIDAVLNPRGVAVMVEAEHLCMAMRGVQKAGVSTLTTQFTGVFKQDPHEQVRFLTLVRDQR.

The interval 1–37 (MDAVLKSLSVRLPDAADKRSDTGRPERVTERPTRQEA) is disordered. Positions 14 to 37 (DAADKRSDTGRPERVTERPTRQEA) are enriched in basic and acidic residues. Zn(2+) is bound by residues Cys108, His111, and Cys179.

It belongs to the GTP cyclohydrolase I family. In terms of assembly, homomer.

The catalysed reaction is GTP + H2O = 7,8-dihydroneopterin 3'-triphosphate + formate + H(+). The protein operates within cofactor biosynthesis; 7,8-dihydroneopterin triphosphate biosynthesis; 7,8-dihydroneopterin triphosphate from GTP: step 1/1. The sequence is that of GTP cyclohydrolase 1 from Methylobacterium sp. (strain 4-46).